The following is a 575-amino-acid chain: uncharacterized protein (575 aa).

6 consecutive transmembrane segments (helical) span residues 16 to 36 (FFLD…FPLI), 50 to 70 (WGLI…SSAL), 132 to 152 (PEDL…MLFI), 154 to 174 (WQLA…ALYF), 243 to 263 (ISYM…TWFV), and 264 to 284 (IRGS…NVLF). Positions 16–299 (FFLDFFSAIA…INAIIEMYPR (284 aa)) constitute an ABC transmembrane type-1 domain. Positions 333-567 (IRYKHVSFGY…GGLYSRLHQA (235 aa)) constitute an ABC transporter domain. 366–373 (GPSGAGKS) is an ATP binding site.

The protein belongs to the ABC transporter superfamily.

Its subcellular location is the cell membrane. The protein resides in the membrane raft. This is an uncharacterized protein from Bacillus subtilis (strain 168).